The following is a 249-amino-acid chain: MIDQYFQKINERLKLVLKHEKDNLKKAAHAVSKAVQNGGIIQLFGCGHSHIMAEEVFYRAGGLVPVKPIFVEPLMLHEGAVRSSMLERMNDFAPSFIDREDIRSEDVFFILSTSGRNPVPIDVALAAKAKGAYTIAITSLEYSKSQPSRHKSGRLLYEVVDLVIDNHSVKGDAILTHQNVSVPFAPTSTVVGSAILNAVLAEAIALMAENGVEPPVFLSGNIEGADEHNRRWIEKYKERIPVLIEGCQP.

The SIS domain occupies 31-214 (VSKAVQNGGI…ALMAENGVEP (184 aa)).

The protein belongs to the UPF0309 family.

The sequence is that of UPF0309 protein GTNG_1302 from Geobacillus thermodenitrificans (strain NG80-2).